Reading from the N-terminus, the 265-residue chain is Tryptophan synthase alpha chain (265 aa).

Residues glutamate 45 and aspartate 56 each act as proton acceptor in the active site.

The protein belongs to the TrpA family. Tetramer of two alpha and two beta chains.

It catalyses the reaction (1S,2R)-1-C-(indol-3-yl)glycerol 3-phosphate + L-serine = D-glyceraldehyde 3-phosphate + L-tryptophan + H2O. It participates in amino-acid biosynthesis; L-tryptophan biosynthesis; L-tryptophan from chorismate: step 5/5. The alpha subunit is responsible for the aldol cleavage of indoleglycerol phosphate to indole and glyceraldehyde 3-phosphate. In Halalkalibacterium halodurans (strain ATCC BAA-125 / DSM 18197 / FERM 7344 / JCM 9153 / C-125) (Bacillus halodurans), this protein is Tryptophan synthase alpha chain.